Reading from the N-terminus, the 348-residue chain is MNDRLLRAARRQPTDTTPVWLMRQAGRYLPEYRAIRGNIAFLDLCKHPDLAAEVTVQPVTRLGVDAAIIFSDILIPVEAMGITLELGDKGPHFPDPVRSAADIDKLGVPDPVEGTGFVAEAIRRTRKALNDSVPVIGFAGAPFTLAAYMVEGGGSKSYILIKRLMFEQPELAHRLFGKLTDTLIPYLKMQVEAGASIVQIFDSWGGALSPWDYERFCIPYLKRMVSELKATGVPVIVFGVGMSSHLSLLKSTGADVVGLDWTLPMDEGRKVLGPDVAVQGNLDPLHLFLPREELDGRVKDILRRAGPEGHIFNLGHGILPPTDPDAAKFLVEAVHRHGVALRQGTLGA.

Substrate-binding positions include 23–27, Asp-72, Tyr-148, Ser-203, and His-316; that span reads RQAGR.

It belongs to the uroporphyrinogen decarboxylase family. In terms of assembly, homodimer.

The protein localises to the cytoplasm. It carries out the reaction uroporphyrinogen III + 4 H(+) = coproporphyrinogen III + 4 CO2. It participates in porphyrin-containing compound metabolism; protoporphyrin-IX biosynthesis; coproporphyrinogen-III from 5-aminolevulinate: step 4/4. Functionally, catalyzes the decarboxylation of four acetate groups of uroporphyrinogen-III to yield coproporphyrinogen-III. This is Uroporphyrinogen decarboxylase from Myxococcus xanthus (strain DK1622).